The chain runs to 29 residues: Glucagon (29 aa).

Ser-2 is modified (phosphoserine).

This sequence belongs to the glucagon family.

It localises to the secreted. Its function is as follows. Glucagon plays a key role in glucose metabolism and homeostasis. Regulates blood glucose by increasing gluconeogenesis and decreasing glycolysis. The sequence is that of Glucagon (GCG) from Oryctolagus cuniculus (Rabbit).